A 273-amino-acid polypeptide reads, in one-letter code: Eukaryotic translation initiation factor 3 subunit G-2 (273 aa).

The interval 165-193 (KYVPPFMKDGGGGPGGKNWGRGRERDDSS) is disordered. Positions 173 to 183 (DGGGGPGGKNW) are enriched in gly residues. An RRM domain is found at 193–271 (SAVRISNLSE…LILCVEWSKP (79 aa)).

This sequence belongs to the eIF-3 subunit G family. In terms of assembly, component of the eukaryotic translation initiation factor 3 (eIF-3) complex. The eIF-3 complex interacts with pix.

It is found in the cytoplasm. Its function is as follows. RNA-binding component of the eukaryotic translation initiation factor 3 (eIF-3) complex, which is involved in protein synthesis of a specialized repertoire of mRNAs and, together with other initiation factors, stimulates binding of mRNA and methionyl-tRNAi to the 40S ribosome. The eIF-3 complex specifically targets and initiates translation of a subset of mRNAs involved in cell proliferation. This subunit can bind 18S rRNA. The sequence is that of Eukaryotic translation initiation factor 3 subunit G-2 from Drosophila yakuba (Fruit fly).